The sequence spans 615 residues: Nitrogen permease regulator 2 (615 aa).

Positions 143–167 are enriched in low complexity; sequence STTTPSTAGPSSTPNPSSNTTPTHP. 3 disordered regions span residues 143–176, 354–398, and 527–551; these read STTT…TKDM, SLGS…QNSS, and SATG…VSFE. Ser362 carries the phosphoserine modification. The span at 373–398 shows a compositional bias: low complexity; that stretch reads SSSIPSNPDSRTTSFSSTSRVSQNSS. Over residues 527–539 the composition is skewed to polar residues; that stretch reads SATGSRNTAQSGN.

It belongs to the NPR2 family. Component of the SEA complex composed of at least IML1/SEA1, RTC1/SEA2, MTC5/SEA3, NPR2, NPR3, SEA4, SEC13 and SEH1. Forms a heterodimer with NPR3.

Its subcellular location is the vacuole membrane. In terms of biological role, component of the SEA complex which coats the vacuolar membrane and is involved in intracellular trafficking, autophagy, response to nitrogen starvation, and amino acid biogenesis. Mediates inactivation of the TORC1 complex in response to amino acid starvation. Post-transcriptional regulator of nitrogen permeases. May be involved in putative NPR1-dependent phosphorylation of nitrogen permeases or in the processing and targeting of nitrogen permeases at the level of the endoplasmic reticulum. The sequence is that of Nitrogen permease regulator 2 (NPR2) from Saccharomyces cerevisiae (strain ATCC 204508 / S288c) (Baker's yeast).